The chain runs to 597 residues: NADH-quinone oxidoreductase subunits H/I (597 aa).

The interval 1–405 (MPDLSLFGHD…FPTPPVPADA (405 aa)) is NADH-quinone oxidoreductase subunit H. The next 9 helical transmembrane spans lie at 12-32 (FWLV…IPLV), 82-102 (PIYL…FAVI), 124-144 (VGVL…VLAG), 170-190 (MALC…SGIV), 195-215 (PTWF…SMVG), 260-280 (ALAT…NLIP), 286-306 (WWGL…FVWL), 318-338 (FMRL…MLVA), and 351-371 (ATGA…GLFL). The interval 406 to 597 (HRVDNPKGGL…APAGAKGGAR (192 aa)) is NADH-quinone oxidoreductase subunit I. 2 4Fe-4S ferredoxin-type domains span residues 455–485 (LNRH…VEGA) and 501–530 (RVYQ…MTND). [4Fe-4S] cluster contacts are provided by C465, C468, C471, C475, C510, C513, C516, and C520.

This sequence in the N-terminal section; belongs to the complex I subunit 1 family. The protein in the C-terminal section; belongs to the complex I 23 kDa subunit family. NDH-1 is composed of 13 different subunits. Subunits NuoA, H/I, J, K, L, M, N constitute the membrane sector of the complex. [4Fe-4S] cluster serves as cofactor.

The protein resides in the cell membrane. It carries out the reaction a quinone + NADH + 5 H(+)(in) = a quinol + NAD(+) + 4 H(+)(out). Its function is as follows. NDH-1 shuttles electrons from NADH, via FMN and iron-sulfur (Fe-S) centers, to quinones in the respiratory chain. The immediate electron acceptor for the enzyme in this species is believed to be ubiquinone. Couples the redox reaction to proton translocation (for every two electrons transferred, four hydrogen ions are translocated across the cytoplasmic membrane), and thus conserves the redox energy in a proton gradient. This subunit may bind ubiquinone. The polypeptide is NADH-quinone oxidoreductase subunits H/I (nuoH/I) (Nocardia farcinica (strain IFM 10152)).